A 263-amino-acid chain; its full sequence is Flagellar L-ring protein (263 aa).

An N-terminal signal peptide occupies residues 1-15; the sequence is MKRLLCLLLLTTLTG. Residue C16 is the site of N-palmitoyl cysteine attachment. C16 carries the S-diacylglycerol cysteine lipid modification. The interval 123–143 is disordered; sequence KSADAELSKSNDSSMDPLQVG.

It belongs to the FlgH family. As to quaternary structure, the basal body constitutes a major portion of the flagellar organelle and consists of four rings (L,P,S, and M) mounted on a central rod.

It localises to the cell outer membrane. The protein resides in the bacterial flagellum basal body. Assembles around the rod to form the L-ring and probably protects the motor/basal body from shearing forces during rotation. This is Flagellar L-ring protein from Aliivibrio fischeri (strain ATCC 700601 / ES114) (Vibrio fischeri).